The sequence spans 302 residues: UDP-N-acetylenolpyruvoylglucosamine reductase (302 aa).

Positions 31–210 (IGGQTKVYFR…ENEVLELKKK (180 aa)) constitute an FAD-binding PCMH-type domain. Arg-175 is a catalytic residue. Ser-224 serves as the catalytic Proton donor. Glu-297 is an active-site residue.

Belongs to the MurB family. FAD is required as a cofactor.

It localises to the cytoplasm. It catalyses the reaction UDP-N-acetyl-alpha-D-muramate + NADP(+) = UDP-N-acetyl-3-O-(1-carboxyvinyl)-alpha-D-glucosamine + NADPH + H(+). It functions in the pathway cell wall biogenesis; peptidoglycan biosynthesis. Functionally, cell wall formation. This chain is UDP-N-acetylenolpyruvoylglucosamine reductase, found in Pelagibacter ubique (strain HTCC1062).